A 192-amino-acid chain; its full sequence is uncharacterized protein (192 aa).

The disordered stretch occupies residues 168 to 192 (PLWRKSEAGSRKARTSNSGGPTKRA). Residues 182 to 192 (TSNSGGPTKRA) are compositionally biased toward polar residues.

The protein to A.xylinum IS1268 ORFA.

This is an uncharacterized protein from Sinorhizobium fredii (strain NBRC 101917 / NGR234).